The following is a 466-amino-acid chain: Citrate synthase, mitochondrial (466 aa).

The N-terminal 27 residues, 1 to 27 (MALLTAAARLLGTKNASCLVLAARHAS), are a transit peptide targeting the mitochondrion. The SIFI-degron signature appears at 2 to 21 (ALLTAAARLLGTKNASCLVL). N6-succinyllysine is present on Lys-57. Lys-76 carries the post-translational modification N6-acetyllysine; alternate. Residue Lys-76 is modified to N6-succinyllysine; alternate. N6-succinyllysine is present on residues Lys-103 and Lys-193. His-301 is a catalytic residue. N6-acetyllysine; alternate occurs at positions 321 and 327. Lys-321 and Lys-327 each carry N6-succinyllysine; alternate. His-347 is a catalytic residue. Residue Arg-356 coordinates oxaloacetate. Residue Lys-375 is modified to N6-acetyllysine; alternate. N6-succinyllysine; alternate is present on Lys-375. Lys-382 is subject to N6-acetyllysine. Lys-393 is modified (N6-acetyllysine; alternate). Lys-393 carries the N6-succinyllysine; alternate modification. N6,N6,N6-trimethyllysine is present on Lys-395. Asp-402 is an active-site residue. Oxaloacetate-binding residues include Arg-428 and Arg-448. Residue Lys-450 is modified to N6-succinyllysine. Residue Lys-459 is modified to N6-acetyllysine; alternate. Lys-459 carries the post-translational modification N6-succinyllysine; alternate.

Belongs to the citrate synthase family. Homodimer. In terms of processing, methylated. Trimethylation at Lys-395 by CSKMT decreases citrate synthase activity. Post-translationally, in response to mitochondrial stress, the precursor protein is ubiquitinated by the SIFI complex in the cytoplasm before mitochondrial import, leading to its degradation. Within the SIFI complex, UBR4 initiates ubiquitin chain that are further elongated or branched by KCMF1.

The protein resides in the mitochondrion matrix. The enzyme catalyses oxaloacetate + acetyl-CoA + H2O = citrate + CoA + H(+). It participates in carbohydrate metabolism; tricarboxylic acid cycle; isocitrate from oxaloacetate: step 1/2. Functionally, key enzyme of the Krebs tricarboxylic acid cycle which catalyzes the synthesis of citrate from acetyl coenzyme A and oxaloacetate. The protein is Citrate synthase, mitochondrial (CS) of Macaca fascicularis (Crab-eating macaque).